We begin with the raw amino-acid sequence, 310 residues long: Polyprenyl transferase ntnF (310 aa).

A run of 8 helical transmembrane segments spans residues 30–50 (HTPE…FYAI), 63–83 (FLGI…WNDI), 110–130 (AMVA…AMLG), 154–174 (IWAP…PPWV), 185–205 (LPAS…LIYA), 230–250 (ACLT…AFEA), 255–275 (FLWV…ILSL), and 286–306 (IFLV…TDVW).

This sequence belongs to the UbiA prenyltransferase family. Requires Mg(2+) as cofactor.

It localises to the membrane. Its pathway is secondary metabolite biosynthesis; terpenoid biosynthesis. Functionally, olyprenyl transferase; part of the gene cluster that mediates the biosynthesis of the meroterpenoids nectripenoids A and B, as well as cochliquninone D and isocochliquninone E. The pathway probably begins with the HR-PKS ntnH that catalyzes two chain-extension steps to form a reduced triketide, which then primes the SAT domain in the NR-PKS ntnG to initiate three more cycles of extension to give a linear hexaketide corresponding to the polyketide part of nectripenoids. The FAD-dependent monooxygenase ntnJ then performs an oxidative decarboxylation at C11 of the ntnH/ntnG product, via an electrophilic aromatic hydroxylation with concomitant ipso-decarboxylation. The membrane-bound polyprenyl transferase ntnF then introduces a farnesyl group before the FAD-dependent monooxygenase ntnK functions as the first epoxidase on terminal C12'-C13' olefin, followed by a second epoxidation on C7'-C8' catalyzed by ntnA. The terpene cyclase/mutase ntnI then initiates the sequential tricyclic ring formation through protonation of the terminal epoxide and catalyzes the regioselective and stereoselective 6/6/6-tricyclic ring formation. The cytochrome P450 monooxygenase ntnM may then hydroxylate C1'. The protein is Polyprenyl transferase ntnF of Nectria sp.